The chain runs to 546 residues: CTP synthase (546 aa).

Residues 1-266 (MTTNYIFVTG…DDLVCQRFGI (266 aa)) are amidoligase domain. S14 is a CTP binding site. UTP is bound at residue S14. Residues 15-20 (SLGKGI) and D72 each bind ATP. D72 and E140 together coordinate Mg(2+). Residues 147 to 149 (DIE), 187 to 192 (KTKPTQ), and K223 each bind CTP. UTP contacts are provided by residues 187–192 (KTKPTQ) and K223. Residue 239–241 (KDV) participates in ATP binding. Residues 291-542 (TIGMVGKYIE…VKAAGENARG (252 aa)) enclose the Glutamine amidotransferase type-1 domain. Position 352 (G352) interacts with L-glutamine. C379 (nucleophile; for glutamine hydrolysis) is an active-site residue. Residues 380-383 (LGMQ), E403, and R470 contribute to the L-glutamine site. Active-site residues include H515 and E517.

It belongs to the CTP synthase family. As to quaternary structure, homotetramer.

It carries out the reaction UTP + L-glutamine + ATP + H2O = CTP + L-glutamate + ADP + phosphate + 2 H(+). It catalyses the reaction L-glutamine + H2O = L-glutamate + NH4(+). The catalysed reaction is UTP + NH4(+) + ATP = CTP + ADP + phosphate + 2 H(+). The protein operates within pyrimidine metabolism; CTP biosynthesis via de novo pathway; CTP from UDP: step 2/2. With respect to regulation, allosterically activated by GTP, when glutamine is the substrate; GTP has no effect on the reaction when ammonia is the substrate. The allosteric effector GTP functions by stabilizing the protein conformation that binds the tetrahedral intermediate(s) formed during glutamine hydrolysis. Inhibited by the product CTP, via allosteric rather than competitive inhibition. Its function is as follows. Catalyzes the ATP-dependent amination of UTP to CTP with either L-glutamine or ammonia as the source of nitrogen. Regulates intracellular CTP levels through interactions with the four ribonucleotide triphosphates. The sequence is that of CTP synthase from Aliivibrio salmonicida (strain LFI1238) (Vibrio salmonicida (strain LFI1238)).